We begin with the raw amino-acid sequence, 159 residues long: Cytochrome c-type biogenesis protein CcmE (159 aa).

At 1–8 the chain is on the cytoplasmic side; that stretch reads MNPRRKTR. The chain crosses the membrane as a helical; Signal-anchor for type II membrane protein span at residues 9-29; that stretch reads LWVALTVLAGLGLTMALVLYA. Residues 30-159 lie on the Periplasmic side of the membrane; that stretch reads LRANIDLFYT…PPQAYKDNRP (130 aa). The heme site is built by His130 and Tyr134. The interval 130-159 is disordered; it reads HDENYTPPEVKAAMDANHTRPPQAYKDNRP.

The protein belongs to the CcmE/CycJ family.

The protein resides in the cell inner membrane. Heme chaperone required for the biogenesis of c-type cytochromes. Transiently binds heme delivered by CcmC and transfers the heme to apo-cytochromes in a process facilitated by CcmF and CcmH. This is Cytochrome c-type biogenesis protein CcmE from Cronobacter sakazakii (strain ATCC BAA-894) (Enterobacter sakazakii).